The primary structure comprises 92 residues: U21-hexatoxin-Hi1a (92 aa).

The signal sequence occupies residues 1–19 (MKTILSMLIFVALFAAIVG). Cystine bridges form between cysteine 41-cysteine 55, cysteine 48-cysteine 67, cysteine 54-cysteine 82, and cysteine 85-cysteine 92.

Belongs to the neurotoxin 21 family. As to expression, expressed by the venom gland.

The protein resides in the secreted. In terms of biological role, potent insecticidal toxin with probable ion channel impairing activity. In vivo, reversibly paralyzes all flies within 30 minutes, even at low dose (0.3 nmol/g). The sequence is that of U21-hexatoxin-Hi1a from Hadronyche infensa (Fraser island funnel-web spider).